Reading from the N-terminus, the 450-residue chain is MEASGTDDVEKLKSKFLSAWHNMKYSWVLKTKTYFKRNSPVFLLGKCYHFKYEDSGVTADDCSNSGSDSKEDLSGNVDEFRKDFISRIWLTYRKEFPQIESSSWTTDCGWGCTLRTGQMLLAQGLLVHFLGRDWTWTEALDIFCSESDFWTANTARKLDPSLEKSSPENEEYVSLGKQPLQNSEKKRYSEDLHRKIISWFADYPLAYFGLHQLVKLGKNSGKVAGDWYGPAVVSHLLRKAIEESSDPELQGITIYVAQDCTIYNADVYDLQCNKGNEKAVVILVPVRLGGERTNMEYFEYVKGILSLEFCIGIIGGKPKQSYYFVGFQDDSLIYMDPHYCQSFVDVSIKNFPLESFHCPSPKKMSFKKMDPSCTVGFYCRNAREFEKAAEELTKVLKSSTKQNYPLFTFVNGHAQDFDFVCTPVYDQNDLFTEDEKKRLKRFSTEEFVLL.

C112 functions as the Nucleophile in the catalytic mechanism. Catalysis depends on residues D336 and H338.

It belongs to the peptidase C54 family.

The protein resides in the cytoplasm. The catalysed reaction is [protein]-C-terminal L-amino acid-glycyl-phosphatidylethanolamide + H2O = [protein]-C-terminal L-amino acid-glycine + a 1,2-diacyl-sn-glycero-3-phosphoethanolamine. In terms of biological role, cysteine protease that plays a key role in autophagy by mediating both proteolytic activation and delipidation of ATG8 family proteins. The protease activity is required for proteolytic activation of ATG8 family proteins: cleaves the C-terminal amino acid of ATG8 proteins to reveal a C-terminal glycine. Exposure of the glycine at the C-terminus is essential for ATG8 proteins conjugation to phosphatidylethanolamine (PE) and insertion to membranes, which is necessary for autophagy. In addition to the protease activity, also mediates delipidation of ATG8 family proteins. Catalyzes delipidation of PE-conjugated forms of ATG8 proteins during macroautophagy. The protein is Cysteine protease ATG4C of Xenopus laevis (African clawed frog).